A 381-amino-acid polypeptide reads, in one-letter code: Molybdenum import ATP-binding protein ModC (381 aa).

In terms of domain architecture, ABC transporter spans 5-238; the sequence is SRSIQAQFRG…PALPLAASRD (234 aa). An ATP-binding site is contributed by 37 to 44; it reads GPSGCGKS. Residues 297 to 367 form the Mop domain; it reads NTSILNVLPA…VKGVALAPGR (71 aa).

It belongs to the ABC transporter superfamily. Molybdate importer (TC 3.A.1.8) family. In terms of assembly, the complex is composed of two ATP-binding proteins (ModC), two transmembrane proteins (ModB) and a solute-binding protein (ModA).

It localises to the cell inner membrane. It catalyses the reaction molybdate(out) + ATP + H2O = molybdate(in) + ADP + phosphate + H(+). Its function is as follows. Part of the ABC transporter complex ModABC involved in molybdenum import. Responsible for energy coupling to the transport system. This Rhodopseudomonas palustris (strain BisB18) protein is Molybdenum import ATP-binding protein ModC.